The following is a 173-amino-acid chain: Large ribosomal subunit protein uL16 (173 aa).

It belongs to the universal ribosomal protein uL16 family.

The protein is Large ribosomal subunit protein uL16 of Methanococcus maripaludis (strain C6 / ATCC BAA-1332).